Here is a 500-residue protein sequence, read N- to C-terminus: Glycerol kinase (500 aa).

Threonine 13 is an ADP binding site. Residues threonine 13, threonine 14, and serine 15 each coordinate ATP. Threonine 13 contributes to the sn-glycerol 3-phosphate binding site. Arginine 17 contributes to the ADP binding site. Sn-glycerol 3-phosphate-binding residues include arginine 83, glutamate 84, tyrosine 136, and aspartate 246. Glycerol contacts are provided by arginine 83, glutamate 84, tyrosine 136, aspartate 246, and glutamine 247. Residues threonine 268 and glycine 311 each coordinate ADP. ATP is bound by residues threonine 268, glycine 311, glutamine 315, and glycine 412. The ADP site is built by glycine 412 and asparagine 416.

This sequence belongs to the FGGY kinase family.

It carries out the reaction glycerol + ATP = sn-glycerol 3-phosphate + ADP + H(+). It functions in the pathway polyol metabolism; glycerol degradation via glycerol kinase pathway; sn-glycerol 3-phosphate from glycerol: step 1/1. Its activity is regulated as follows. Inhibited by fructose 1,6-bisphosphate (FBP). Functionally, key enzyme in the regulation of glycerol uptake and metabolism. Catalyzes the phosphorylation of glycerol to yield sn-glycerol 3-phosphate. This chain is Glycerol kinase, found in Francisella tularensis subsp. novicida (strain U112).